The chain runs to 123 residues: MPTIQQLIRNPREPKRTRTKTPALKACPQRRGVCTRVYTTTPKKPNSALRKVAKVRMTSGFESLCYIPGEGHNLQEHSVVLIRGGRVKDLPGVRYHIVRGALDTQPVKNRKQRRSHYGAKKPK.

The disordered stretch occupies residues 1–28; it reads MPTIQQLIRNPREPKRTRTKTPALKACP. A 3-methylthioaspartic acid modification is found at Asp-89. Residues 104–123 are disordered; that stretch reads TQPVKNRKQRRSHYGAKKPK. Basic residues predominate over residues 108–123; it reads KNRKQRRSHYGAKKPK.

Belongs to the universal ribosomal protein uS12 family. In terms of assembly, part of the 30S ribosomal subunit. Contacts proteins S8 and S17. May interact with IF1 in the 30S initiation complex.

In terms of biological role, with S4 and S5 plays an important role in translational accuracy. Interacts with and stabilizes bases of the 16S rRNA that are involved in tRNA selection in the A site and with the mRNA backbone. Located at the interface of the 30S and 50S subunits, it traverses the body of the 30S subunit contacting proteins on the other side and probably holding the rRNA structure together. The combined cluster of proteins S8, S12 and S17 appears to hold together the shoulder and platform of the 30S subunit. This Hyphomonas neptunium (strain ATCC 15444) protein is Small ribosomal subunit protein uS12.